A 59-amino-acid polypeptide reads, in one-letter code: Large ribosomal subunit protein bL32 (59 aa).

The span at 1 to 22 shows a compositional bias: basic residues; sequence MAVPKKKTSNSKRDSRRAHWNR. The tract at residues 1 to 59 is disordered; sequence MAVPKKKTSNSKRDSRRAHWNRKANLAAQRALSTGKSILTGRAKGFEYPTKDDDEDDDE.

This sequence belongs to the bacterial ribosomal protein bL32 family.

The chain is Large ribosomal subunit protein bL32 from Acaryochloris marina (strain MBIC 11017).